The following is a 2184-amino-acid chain: Genome polyprotein (2184 aa).

The N-myristoyl glycine; by host moiety is linked to residue Gly-2. The Cytoplasmic segment spans residues 2-1494; the sequence is GAQVSTQKTG…HVSRAFICLQ (1493 aa). Positions 567-583 are amphipathic alpha-helix; sequence FYQGDVQNAVEGAMVRV. Residues His-871 and Asp-889 each act as for protease 2A activity in the active site. Zn(2+) contacts are provided by Cys-906 and Cys-908. Residue Cys-960 is the For protease 2A activity of the active site. Residues Cys-966 and His-968 each coordinate Zn(2+). Residues 1100–1172 form a membrane-binding region; sequence NNGWLKKFTE…EQSAPSQGDQ (73 aa). The oligomerization stretch occupies residues 1100 to 1238; that stretch reads NNGWLKKFTE…SPGAGKSVAT (139 aa). Positions 1121–1125 are RNA-binding; sequence AIKIQ. In terms of domain architecture, SF3 helicase spans 1204-1360; sequence EKKMSNYIQF…SMYSQNGKIN (157 aa). Positions 1368, 1380, and 1385 each coordinate Zn(2+). The C4-type; degenerate zinc finger occupies 1368 to 1385; sequence CDEDCCPVNFKKCCPLVC. The segment at 1412 to 1419 is RNA-binding; the sequence is EYNHRHSV. The oligomerization stretch occupies residues 1423-1428; it reads LEALFQ. Residues 1495 to 1510 lie within the membrane without spanning it; that stretch reads ALTTFVSVAGIIYIIY. The Cytoplasmic segment spans residues 1511–2184; it reads KLFAGFQGAY…TLRRKWLDSF (674 aa). O-(5'-phospho-RNA)-tyrosine is present on Tyr-1520. Positions 1540-1718 constitute a Peptidase C3 domain; it reads GPAFEFAVAM…FSAALLRHYF (179 aa). Catalysis depends on for protease 3C activity residues His-1579, Glu-1610, and Cys-1686. The RdRp catalytic domain maps to 1949 to 2065; it reads GHLIAFDYSG…SYPWPIDASL (117 aa). Mg(2+)-binding residues include Asp-1955 and Asp-2051.

The protein belongs to the picornaviruses polyprotein family. As to quaternary structure, interacts with capsid protein VP1 and capsid protein VP3 to form heterotrimeric protomers. Interacts with capsid protein VP0, and capsid protein VP3 to form heterotrimeric protomers. Five protomers subsequently associate to form pentamers which serve as building blocks for the capsid. Interacts with capsid protein VP2, capsid protein VP3 and capsid protein VP4 following cleavage of capsid protein VP0. In terms of assembly, interacts with capsid protein VP1 and capsid protein VP3 in the mature capsid. As to quaternary structure, interacts with capsid protein VP0 and capsid protein VP1 to form heterotrimeric protomers. Five protomers subsequently associate to form pentamers which serve as building blocks for the capsid. Interacts with capsid protein VP4 in the mature capsid. Interacts with protein 2C; this interaction may be important for virion morphogenesis. Interacts with capsid protein VP1 and capsid protein VP3. In terms of assembly, homodimer. As to quaternary structure, homohexamer; forms a hexameric ring structure with 6-fold symmetry characteristic of AAA+ ATPases. Interacts (via N-terminus) with host RTN3 (via reticulon domain); this interaction is important for viral replication. Interacts with capsid protein VP3; this interaction may be important for virion morphogenesis. Interacts with protein 3CD. In terms of assembly, homodimer. Interacts with host GBF1. Interacts (via GOLD domain) with host ACBD3 (via GOLD domain); this interaction allows the formation of a viral protein 3A/ACBD3 heterotetramer with a 2:2 stoichiometry, which will stimulate the recruitment of host PI4KB in order to synthesize PI4P at the viral RNA replication sites. As to quaternary structure, interacts with RNA-directed RNA polymerase. Interacts with protein 3AB and with RNA-directed RNA polymerase. In terms of assembly, interacts with Viral protein genome-linked and with protein 3CD. Requires Mg(2+) as cofactor. Post-translationally, specific enzymatic cleavages in vivo by the viral proteases yield processing intermediates and the mature proteins. In terms of processing, myristoylation is required for the formation of pentamers during virus assembly. Further assembly of 12 pentamers and a molecule of genomic RNA generates the provirion. During virion maturation, immature virions are rendered infectious following cleavage of VP0 into VP4 and VP2. This maturation seems to be an autocatalytic event triggered by the presence of RNA in the capsid and it is followed by a conformational change infectious virion. Post-translationally, myristoylation is required during RNA encapsidation and formation of the mature virus particle. In terms of processing, VPg is uridylylated by the polymerase into VPg-pUpU. This acts as a nucleotide-peptide primer for the genomic RNA replication.

Its subcellular location is the virion. The protein localises to the host cytoplasm. It is found in the host cytoplasmic vesicle membrane. The protein resides in the host nucleus. The enzyme catalyses a ribonucleoside 5'-triphosphate + H2O = a ribonucleoside 5'-diphosphate + phosphate + H(+). It catalyses the reaction Selective cleavage of Tyr-|-Gly bond in the picornavirus polyprotein.. It carries out the reaction RNA(n) + a ribonucleoside 5'-triphosphate = RNA(n+1) + diphosphate. The catalysed reaction is Selective cleavage of Gln-|-Gly bond in the poliovirus polyprotein. In other picornavirus reactions Glu may be substituted for Gln, and Ser or Thr for Gly.. Its activity is regulated as follows. Replication or transcription is subject to high level of random mutations by the nucleotide analog ribavirin. Functionally, forms an icosahedral capsid of pseudo T=3 symmetry with capsid proteins VP2 and VP3. The capsid is 300 Angstroms in diameter, composed of 60 copies of each capsid protein and enclosing the viral positive strand RNA genome. Capsid protein VP1 mainly forms the vertices of the capsid. Capsid protein VP1 interacts with host ITGA2/ITGB1 to provide virion attachment to target host cells. This attachment induces virion internalization predominantly through caveolin-mediated endocytosis. Tyrosine kinases are probably involved in the entry process. After binding to its receptor, the capsid undergoes conformational changes. Capsid protein VP1 N-terminus (that contains an amphipathic alpha-helix) and capsid protein VP4 are externalized. Together, they shape a pore in the host membrane through which viral genome is translocated to host cell cytoplasm. Its function is as follows. Forms an icosahedral capsid of pseudo T=3 symmetry with capsid proteins VP2 and VP3. The capsid is 300 Angstroms in diameter, composed of 60 copies of each capsid protein and enclosing the viral positive strand RNA genome. In terms of biological role, lies on the inner surface of the capsid shell. After binding to the host receptor, the capsid undergoes conformational changes. Capsid protein VP4 is released, Capsid protein VP1 N-terminus is externalized, and together, they shape a pore in the host membrane through which the viral genome is translocated into the host cell cytoplasm. Component of immature procapsids, which is cleaved into capsid proteins VP4 and VP2 after maturation. Allows the capsid to remain inactive before the maturation step. Functionally, cysteine protease that cleaves viral polyprotein and specific host proteins. It is responsible for the autocatalytic cleavage between the P1 and P2 regions, which is the first cleavage occurring in the polyprotein. Also cleaves the host translation initiation factor EIF4G1, in order to shut down the capped cellular mRNA translation. Inhibits the host nucleus-cytoplasm protein and RNA trafficking by cleaving host members of the nuclear pores. Counteracts stress granule formation probably by antagonizing its assembly or promoting its dissassembly. Its function is as follows. Plays an essential role in the virus replication cycle by acting as a viroporin. Creates a pore in the host endoplasmic reticulum and as a consequence releases Ca2+ in the cytoplasm of infected cell. In turn, high levels of cytoplasmic calcium may trigger membrane trafficking and transport of viral ER-associated proteins to viroplasms, sites of viral genome replication. In terms of biological role, induces and associates with structural rearrangements of intracellular membranes. Displays RNA-binding, nucleotide binding and NTPase activities. May play a role in virion morphogenesis and viral RNA encapsidation by interacting with the capsid protein VP3. Localizes the viral replication complex to the surface of membranous vesicles. Together with protein 3CD binds the Cis-Active RNA Element (CRE) which is involved in RNA synthesis initiation. Acts as a cofactor to stimulate the activity of 3D polymerase, maybe through a nucleid acid chaperone activity. Functionally, localizes the viral replication complex to the surface of membranous vesicles. It inhibits host cell endoplasmic reticulum-to-Golgi apparatus transport and causes the disassembly of the Golgi complex, possibly through GBF1 interaction. This would result in depletion of MHC, trail receptors and IFN receptors at the host cell surface. Plays an essential role in viral RNA replication by recruiting ACBD3 and PI4KB at the viral replication sites, thereby allowing the formation of the rearranged membranous structures where viral replication takes place. Its function is as follows. Acts as a primer for viral RNA replication and remains covalently bound to viral genomic RNA. VPg is uridylylated prior to priming replication into VPg-pUpU. The oriI viral genomic sequence may act as a template for this. The VPg-pUpU is then used as primer on the genomic RNA poly(A) by the RNA-dependent RNA polymerase to replicate the viral genome. During genome replication, the VPg-RNA linkage is removed by the host TDP2, thereby accelerating replication. During the late stage of the replication cycle, host TDP2 is excluded from sites of viral RNA synthesis and encapsidation, allowing for the generation of progeny virions. In terms of biological role, involved in the viral replication complex and viral polypeptide maturation. It exhibits protease activity with a specificity and catalytic efficiency that is different from protease 3C. Protein 3CD lacks polymerase activity. Protein 3CD binds to the 5'UTR of the viral genome. Replicates the viral genomic RNA on the surface of intracellular membranes. May form linear arrays of subunits that propagate along a strong head-to-tail interaction called interface-I. Covalently attaches UMP to a tyrosine of VPg, which is used to prime RNA synthesis. The positive stranded RNA genome is first replicated at virus induced membranous vesicles, creating a dsRNA genomic replication form. This dsRNA is then used as template to synthesize positive stranded RNA genomes. ss(+)RNA genomes are either translated, replicated or encapsidated. Functionally, major viral protease that mediates proteolytic processing of the polyprotein. Cleaves host EIF5B, contributing to host translation shutoff. Also cleaves host PABPC1, contributing to host translation shutoff. Cleaves host NLRP1, triggers host N-glycine-mediated degradation of the autoinhibitory NLRP1 N-terminal fragment. The chain is Genome polyprotein from Homo sapiens (Human).